We begin with the raw amino-acid sequence, 215 residues long: Ribonuclease S-6 (215 aa).

Positions 1–22 (MFNLPLTSVFVIFLFALSPIYG) are cleaved as a signal peptide. Q32 contacts RNA. A disulfide bridge links C38 with C43. N-linked (GlcNAc...) asparagine glycosylation occurs at N49. H53 provides a ligand contact to RNA. The Proton donor role is filled by H53. N59 carries an N-linked (GlcNAc...) asparagine glycan. C67 and C116 are joined by a disulfide. Residues 91–92 (DL), R94, F105, 108–109 (RE), and 112–113 (KH) each bind RNA. E109 is an active-site residue. H113 serves as the catalytic Proton acceptor. 2 N-linked (GlcNAc...) asparagine glycosylation sites follow: N160 and N172. Intrachain disulfides connect C175–C204 and C187–C198.

The protein belongs to the RNase T2 family.

It is found in the secreted. Its subcellular location is the extracellular space. The catalysed reaction is a ribonucleotidyl-ribonucleotide-RNA + H2O = a 3'-end 3'-phospho-ribonucleotide-RNA + a 5'-end dephospho-ribonucleoside-RNA + H(+). Self-incompatibility (SI) is the inherited ability of a flowering plant to prevent self-fertilization by discriminating between self and non-self pollen during pollination. In many species of the Solanaceae, self-incompatibility is controlled by the single, multiallelic locus S. This stylar glycoprotein is associated with expression of self-incompatibility in potato. This Nicotiana alata (Winged tobacco) protein is Ribonuclease S-6.